A 200-amino-acid chain; its full sequence is Protein Mbur_1344 (200 aa).

Residues 5 to 192 (SEGEQTVRLA…EVEPRGDIEE (188 aa)) enclose the AMMECR1 domain.

The polypeptide is Protein Mbur_1344 (Methanococcoides burtonii (strain DSM 6242 / NBRC 107633 / OCM 468 / ACE-M)).